A 152-amino-acid polypeptide reads, in one-letter code: MDASTKTTKKGAGGRKGGGPRKKSVTRSIRAGLQFPVGRIGRYLKKGRYAQRVGTGAPVYLAAVLEYLAAEVLELAGNAARDNKKNRIIPRHLLLAVRNDEELGKLLAGVTIAHGGVLPNINPILLPKKTERANTGGKEPKTTKAGKSPKKA.

2 disordered regions span residues 1 to 25 (MDAS…KKSV) and 129 to 152 (KTER…PKKA). A compositionally biased stretch (basic residues) spans 7–25 (TTKKGAGGRKGGGPRKKSV). Positions 129–142 (KTERANTGGKEPKT) are enriched in basic and acidic residues. Positions 148–151 (SPKK) match the SPKK motif motif.

The protein belongs to the histone H2A family. The nucleosome is a histone octamer containing two molecules each of H2A, H2B, H3 and H4 assembled in one H3-H4 heterotetramer and two H2A-H2B heterodimers. The octamer wraps approximately 147 bp of DNA.

Its subcellular location is the nucleus. It localises to the chromosome. Its function is as follows. Core component of nucleosome. Nucleosomes wrap and compact DNA into chromatin, limiting DNA accessibility to the cellular machineries which require DNA as a template. Histones thereby play a central role in transcription regulation, DNA repair, DNA replication and chromosomal stability. DNA accessibility is regulated via a complex set of post-translational modifications of histones, also called histone code, and nucleosome remodeling. This is Probable histone H2A.3 from Medicago truncatula (Barrel medic).